We begin with the raw amino-acid sequence, 267 residues long: Nus factor SuhB (267 aa).

Residues glutamate 67, aspartate 84, and leucine 86 each contribute to the Mg(2+) site. Glutamate 67 provides a ligand contact to substrate. Substrate-binding positions include 86–89, arginine 183, and aspartate 212; that span reads LDGT.

It belongs to the inositol monophosphatase superfamily. As to quaternary structure, homodimer. The rRNA transcription and antitermination complex (rrnTAC) consists of RNA polymerase (RNAP), NusA, NusB, NusE (rpsJ), NusG, SubB, ribosomal protein S4, DNA and precursor rRNA; S4 is more flexible than other subunits. Mg(2+) serves as cofactor.

It localises to the cytoplasm. It catalyses the reaction a myo-inositol phosphate + H2O = myo-inositol + phosphate. Its function is as follows. Part of the processive rRNA transcription and antitermination complex (rrnTAC). The complex forms an RNA-chaperone ring around the RNA exit tunnel of RNA polymerase (RNAP). It supports rapid transcription and antitermination of rRNA operons, cotranscriptional rRNA folding, and annealing of distal rRNA regions to allow correct ribosome biogenesis. This subunit may play a central role in organizing the structure. The chain is Nus factor SuhB from Vibrio cholerae serotype O1 (strain ATCC 39315 / El Tor Inaba N16961).